The sequence spans 151 residues: FAD synthase (151 aa).

Residues 12-13, 17-20, Asp97, and Tyr125 contribute to the ATP site; these read TF and HPGH.

Belongs to the archaeal FAD synthase family. As to quaternary structure, homodimer. Requires a divalent metal cation as cofactor.

It carries out the reaction FMN + ATP + H(+) = FAD + diphosphate. It participates in cofactor biosynthesis; FAD biosynthesis; FAD from FMN: step 1/1. In terms of biological role, catalyzes the transfer of the AMP portion of ATP to flavin mononucleotide (FMN) to produce flavin adenine dinucleotide (FAD) coenzyme. This Methanococcus vannielii (strain ATCC 35089 / DSM 1224 / JCM 13029 / OCM 148 / SB) protein is FAD synthase.